Reading from the N-terminus, the 319-residue chain is MKCILFKWVLCLLLGFSSVSYSREFTIDFSTQQSYVSSLNSIRTEISTPLEHISQGTTSVSVINHTPPGSYFAVDIRGLDVYQARFDHLRLIIEQNNLYVAGFVNTATNTFYRFSDFTHISVPGVTTVSMTTDSSYTTLQRVAALERSGMQISRHSLVSSYLALMEFSGNTMTRDASRAVLRFVTVTAEALRFRQIQREFRQALSETAPVYTMTPGDVDLTLNWGRISNVLPEYRGEDGVRVGRISFNNISAILGTVAVILNCHHQGARSVRAVNEESQPECQITGDRPVIKINNTLWESNTAAAFLNRKSQFLYTTGK.

Residues 1 to 22 (MKCILFKWVLCLLLGFSSVSYS) form the signal peptide. Positions 23–272 (REFTIDFSTQ…CHHQGARSVR (250 aa)) are A1. Glutamate 189 is a catalytic residue. A disulfide bond links cysteine 263 and cysteine 282. The tract at residues 273-314 (AVNEESQPECQITGDRPVIKINNTLWESNTAAAFLNRKSQFL) is A2.

This sequence belongs to the ribosome-inactivating protein family. Shiga-like toxin contains a single A subunit and multiple copies of a B subunit.

It is found in the secreted. It catalyses the reaction Endohydrolysis of the N-glycosidic bond at one specific adenosine on the 28S rRNA.. In terms of biological role, the A subunit is responsible for inhibiting protein synthesis through the catalytic inactivation of 60S ribosomal subunits. After endocytosis, the A subunit is cleaved by furin in two fragments, A1 and A2: A1 is the catalytically active fragment, and A2 is essential for holotoxin assembly with the B subunits. The sequence is that of Shiga-like toxin 2 subunit A (stxA2) from Escherichia coli O157:H7 (Bacteriophage 933W).